Reading from the N-terminus, the 319-residue chain is Acetyl-coenzyme A carboxylase carboxyl transferase subunit alpha (319 aa).

One can recognise a CoA carboxyltransferase C-terminal domain in the interval leucine 43–glutamate 296.

Belongs to the AccA family. In terms of assembly, acetyl-CoA carboxylase is a heterohexamer composed of biotin carboxyl carrier protein (AccB), biotin carboxylase (AccC) and two subunits each of ACCase subunit alpha (AccA) and ACCase subunit beta (AccD).

The protein resides in the cytoplasm. The enzyme catalyses N(6)-carboxybiotinyl-L-lysyl-[protein] + acetyl-CoA = N(6)-biotinyl-L-lysyl-[protein] + malonyl-CoA. Its pathway is lipid metabolism; malonyl-CoA biosynthesis; malonyl-CoA from acetyl-CoA: step 1/1. Functionally, component of the acetyl coenzyme A carboxylase (ACC) complex. First, biotin carboxylase catalyzes the carboxylation of biotin on its carrier protein (BCCP) and then the CO(2) group is transferred by the carboxyltransferase to acetyl-CoA to form malonyl-CoA. The sequence is that of Acetyl-coenzyme A carboxylase carboxyl transferase subunit alpha from Blochmanniella floridana.